A 72-amino-acid chain; its full sequence is DNA gyrase inhibitor YacG (72 aa).

4 residues coordinate Zn(2+): C7, C10, C26, and C30. The interval 44–72 (SIAGEEHTPSSDTARPQLSAEDLALLEQD) is disordered.

It belongs to the DNA gyrase inhibitor YacG family. In terms of assembly, interacts with GyrB. Requires Zn(2+) as cofactor.

Inhibits all the catalytic activities of DNA gyrase by preventing its interaction with DNA. Acts by binding directly to the C-terminal domain of GyrB, which probably disrupts DNA binding by the gyrase. This chain is DNA gyrase inhibitor YacG, found in Tolumonas auensis (strain DSM 9187 / NBRC 110442 / TA 4).